We begin with the raw amino-acid sequence, 267 residues long: Outer membrane protein assembly factor BamD (267 aa).

The first 16 residues, 1–16, serve as a signal peptide directing secretion; the sequence is MKKILLTVSLGLALSA. C17 carries N-palmitoyl cysteine lipidation. A lipid anchor (S-diacylglycerol cysteine) is attached at C17.

The protein belongs to the BamD family. Part of the Bam complex.

Its subcellular location is the cell outer membrane. Its function is as follows. Part of the outer membrane protein assembly complex, which is involved in assembly and insertion of beta-barrel proteins into the outer membrane. Required for efficient transformation of Neisseria meningitidis by species-related DNA. The protein is Outer membrane protein assembly factor BamD of Neisseria meningitidis serogroup A / serotype 4A (strain DSM 15465 / Z2491).